Here is a 63-residue protein sequence, read N- to C-terminus: Large ribosomal subunit protein bL28 (63 aa).

The protein belongs to the bacterial ribosomal protein bL28 family.

This Petrotoga mobilis (strain DSM 10674 / SJ95) protein is Large ribosomal subunit protein bL28.